Consider the following 296-residue polypeptide: MRLWIVSVLVLTHLVHGALCWGKDGHYTVCKLAEGFFEDDTIAAVKKLLPESVDGGGLADFCSWPDEIKKLSQWQWTSTLHYVNTPEYRCNYEYCRDCHDTHKHKDWCVTGAIFNYTNQLMSASENSQNIVHYNLTEALLFLSHYMGDVHQPLHTGFLGDLGGNTIIVNWYHNKSNLHHVWDNMIIDSALETYYNSSLPHMIQALQAKLKNGWSNDVPSWKSCHFHQKACPNLYASESIDLACKYAYRNATPGTTLGDEYFLSRLPVVEKRLAQGGIRLAATLNRIFSAKPKLAGL.

The first 20 residues, 1 to 20, serve as a signal peptide directing secretion; it reads MRLWIVSVLVLTHLVHGALC. The a divalent metal cation site is built by Trp21 and His26. 21–26 is a substrate binding site; the sequence is WGKDGH. Cysteines 30 and 62 form a disulfide. Residues Asp66 and His81 each contribute to the a divalent metal cation site. Substrate is bound by residues 66 to 72, 81 to 84, and 91 to 96; these read DEIKKLS, HYVN, and NYEYCR. Intrachain disulfides connect Cys90/Cys243, Cys98/Cys108, and Cys223/Cys230. Asn115 and Tyr133 together coordinate substrate. N-linked (GlcNAc...) asparagine glycosylation occurs at Asn115. Asn134 carries an N-linked (GlcNAc...) asparagine glycan. A divalent metal cation-binding residues include His144, Asp148, and His154. Positions 144–193 are substrate binding; sequence HYMGDVHQPLHTGFLGDLGGNTIIVNWYHNKSNLHHVWDNMIIDSALETY. N-linked (GlcNAc...) asparagine glycosylation occurs at Asn173. The a divalent metal cation site is built by His178 and Asp182. N-linked (GlcNAc...) asparagine glycosylation occurs at Asn195. Residues 281–296 constitute a propeptide, removed in mature form; the sequence is ATLNRIFSAKPKLAGL.

This sequence belongs to the nuclease type I family. Monomer. Zn(2+) is required as a cofactor.

The catalysed reaction is Endonucleolytic cleavage to 5'-phosphomononucleotide and 5'-phosphooligonucleotide end-products.. In terms of biological role, hydrolyzes, with low efficiency, only single-stranded DNA and RNA without apparent specificity for bases. Endonuclease that recognizes and cleaves some mismatches with high efficiency, including heteroduplex double-stranded DNA; mostly efficient on T/G, A/G and G/G mismatches, less efficient for T/T and poorly efficient for C/C, A/A, T/C and A/C. This chain is Endonuclease 5, found in Arabidopsis thaliana (Mouse-ear cress).